Reading from the N-terminus, the 312-residue chain is Heme oxygenase 2 (312 aa).

N-acetylserine is present on S2. S2 is subject to Phosphoserine. A heme b-binding site is contributed by H41. HRM repeat units follow at residues 260-265 (KCPYYA) and 277-282 (SCPFRA). S-nitrosocysteine is present on residues C261 and C278.

The protein belongs to the heme oxygenase family. S-nitrosylated by BLVRB.

Its subcellular location is the microsome. The protein resides in the endoplasmic reticulum. The enzyme catalyses heme b + 3 reduced [NADPH--hemoprotein reductase] + 3 O2 = biliverdin IXalpha + CO + Fe(2+) + 3 oxidized [NADPH--hemoprotein reductase] + 3 H2O + H(+). Heme oxygenase cleaves the heme ring at the alpha methene bridge to form biliverdin. Biliverdin is subsequently converted to bilirubin by biliverdin reductase. Under physiological conditions, the activity of heme oxygenase is highest in the spleen, where senescent erythrocytes are sequestrated and destroyed. Heme oxygenase 2 could be implicated in the production of carbon monoxide in brain where it could act as a neurotransmitter. This Oryctolagus cuniculus (Rabbit) protein is Heme oxygenase 2 (HMOX2).